A 252-amino-acid chain; its full sequence is Aquaporin TIP1-2 (252 aa).

Residues 1–23 (MPIGSIAIGAPGEASHPDTIKAS) are Cytoplasmic-facing. Residues 24–44 (LAEFISTLIFVFAGEGSGMAF) traverse the membrane as a helical segment. Topologically, residues 45-55 (NKLTNDGSTTP) are vacuolar. A helical membrane pass occupies residues 56–76 (AGLVAASLAHGFALFVAVSVG). Topologically, residues 77–103 (ANISGGHVNPAVTFGAFLGGNISLIRG) are cytoplasmic. Residues 85–87 (NPA) carry the NPA 1 motif. A helical transmembrane segment spans residues 104-124 (ILYWIAQLLGSVVACLLLKLA). The Vacuolar portion of the chain corresponds to 125-143 (TGGLETSAFSLSSDVSVWN). The helical transmembrane segment at 144–164 (AVVFEIVMTFGLVYTVYATAV) threads the bilayer. Topologically, residues 165-172 (DPRKGDLG) are cytoplasmic. A helical transmembrane segment spans residues 173–193 (VIAPIAIGFIVGANILAGGAF). At 194-219 (DGASMNPAVSFGPAVVSWTWDNHWVY) the chain is on the vacuolar side. Residues 199 to 201 (NPA) carry the NPA 2 motif. Residues 220–240 (WVGPLIGAAIAALVYDGVFIG) form a helical membrane-spanning segment. Residues 241–252 (QATHEQLPPSDY) are Cytoplasmic-facing.

It belongs to the MIP/aquaporin (TC 1.A.8) family. TIP (TC 1.A.8.10) subfamily. In terms of tissue distribution, mainly expressed in fruits and leaves, and, to a lower extent, in roots, stems and flowers.

It is found in the vacuole membrane. Functionally, water channel required to facilitate the transport of water from the vacuolar compartment to the cytoplasm. The polypeptide is Aquaporin TIP1-2 (Musa acuminata (Banana)).